Consider the following 309-residue polypeptide: uncharacterized protein (309 aa).

One can recognise an HTH lysR-type domain in the interval 1 to 60; that stretch reads MKPLLDVLMILDALEKEGSFAAASAKLYKTPSALSYTVHKLESDLNIQLLDRSGHRAKFT. Positions 20–39 form a DNA-binding region, H-T-H motif; sequence FAAASAKLYKTPSALSYTVH.

The protein belongs to the LysR transcriptional regulatory family.

This is an uncharacterized protein from Escherichia coli (strain K12).